Here is a 726-residue protein sequence, read N- to C-terminus: Catalase-peroxidase (726 aa).

The tract at residues 1 to 33 is disordered; the sequence is MSTSDDIHNTTATGKCPFHQGGHDQSAGAGTTT. Positions 105-226 form a cross-link, tryptophyl-tyrosyl-methioninium (Trp-Tyr) (with M-252); the sequence is WHGAGTYRSI…LGATEMGLIY (122 aa). H106 serves as the catalytic Proton acceptor. The segment at residues 226–252 is a cross-link (tryptophyl-tyrosyl-methioninium (Tyr-Met) (with W-105)); the sequence is YVNPEGPDHSGEPLSAAAAIRATFGNM. H267 is a heme b binding site.

The protein belongs to the peroxidase family. Peroxidase/catalase subfamily. As to quaternary structure, homodimer or homotetramer. It depends on heme b as a cofactor. Post-translationally, formation of the three residue Trp-Tyr-Met cross-link is important for the catalase, but not the peroxidase activity of the enzyme.

It catalyses the reaction H2O2 + AH2 = A + 2 H2O. The catalysed reaction is 2 H2O2 = O2 + 2 H2O. Bifunctional enzyme with both catalase and broad-spectrum peroxidase activity. The chain is Catalase-peroxidase from Escherichia coli (strain K12 / DH10B).